The chain runs to 231 residues: Endonuclease NucS (231 aa).

The protein belongs to the NucS endonuclease family.

It localises to the cytoplasm. Cleaves both 3' and 5' ssDNA extremities of branched DNA structures. The protein is Endonuclease NucS of Arthrobacter sp. (strain FB24).